Here is a 237-residue protein sequence, read N- to C-terminus: MGRKSNRAKEKKQRRLEERAAMDAVCAKVDAANKLEDPLSAMPVFKKYDRNGLNLQIECKRVTALSPDTVEWAYELTRANMQTLYEQSEWGWKEREKREEMKDERAWYLLARDADSTPLAFSHFRFDVECGDEVLYCYEVQLESKVRRKGLGKFLIQILQLIANSTQMKKVMLTVFKHNHGAYQFFREALQFEIDETSPSMSGCCGEDCSYEILSRRTKYGEVSGHAHGGHCGGCCH.

Gly2 is lipidated: N-myristoyl glycine. An N-acetyltransferase domain is found at 63 to 216 (TALSPDTVEW…EDCSYEILSR (154 aa)). Substrate contacts are provided by residues Tyr85, 127 to 129 (DVE), and Tyr138. Acetyl-CoA is bound by residues 140–142 (VQL) and 148–153 (RKGLGK). Thr174 contributes to the substrate binding site. Asn179 contacts acetyl-CoA. Residue Tyr211 participates in substrate binding.

It belongs to the acetyltransferase family. NAA40 subfamily.

It localises to the cytoplasm. The protein localises to the nucleus. It catalyses the reaction N-terminal L-seryl-[histone H4] + acetyl-CoA = N-terminal N(alpha)-acetyl-L-seryl-[histone H4] + CoA + H(+). It carries out the reaction N-terminal L-seryl-[histone H2A] + acetyl-CoA = N-terminal N(alpha)-acetyl-L-seryl-[histone H2A] + CoA + H(+). Functionally, N-alpha-acetyltransferase that specifically mediates the acetylation of the N-terminal residues of histones H4 and H2A. In contrast to other N-alpha-acetyltransferase, has a very specific selectivity for histones H4 and H2A N-terminus and specifically recognizes the 'Ser-Gly-Arg-Gly sequence'. The protein is N-alpha-acetyltransferase 40 (naa40) of Danio rerio (Zebrafish).